The primary structure comprises 838 residues: E3 ubiquitin-protein ligase RNF19A (838 aa).

Residues Asp-41 to Lys-61 form a disordered region. Over residues Ser-46 to Lys-57 the composition is skewed to low complexity. The TRIAD supradomain stretch occupies residues Asp-128–Gly-351. 18 residues coordinate Zn(2+): Cys-132, Cys-135, Cys-150, His-152, Cys-155, Cys-158, Cys-176, Cys-179, Cys-219, Cys-224, Cys-241, Cys-246, Cys-251, Cys-254, His-259, Cys-264, Cys-301, and Cys-304. The RING-type 1 zinc finger occupies Cys-132–Cys-179. The IBR-type zinc finger occupies Glu-199–Cys-264. The segment at Cys-301–Cys-332 adopts an RING-type 2; atypical zinc-finger fold. The active site involves Cys-316. Residues Cys-321, Cys-324, Cys-329, Cys-332, His-340, and Cys-347 each contribute to the Zn(2+) site. The next 2 helical transmembrane spans lie at Leu-368–Ile-388 and Val-424–Ala-444. Disordered stretches follow at residues Ser-622 to Lys-685 and Gln-700 to Ala-721. The span at Asn-630–Lys-662 shows a compositional bias: polar residues. Ser-631 is subject to Phosphoserine. The interval Ala-660 to Ile-838 is interaction with CASR. Basic residues predominate over residues Lys-671–Asn-683. Residues Gln-700–Met-717 are compositionally biased toward polar residues.

It belongs to the RBR family. RNF19 subfamily. As to quaternary structure, interacts with UBE2L3 and UBE2L6. Interacts with transcription factor Sp1. Interacts with VCP, CASR, SNCAIP and with some SOD1 variants which cause amyotrophic lateral sclerosis, but not with wild-type SOD1. In terms of tissue distribution, widely expressed, with highest levels in heart. Ubiquitously expressed in the central nervous system.

The protein resides in the membrane. The protein localises to the cytoplasm. It is found in the cytoskeleton. Its subcellular location is the microtubule organizing center. It localises to the centrosome. The enzyme catalyses [E2 ubiquitin-conjugating enzyme]-S-ubiquitinyl-L-cysteine + [acceptor protein]-L-lysine = [E2 ubiquitin-conjugating enzyme]-L-cysteine + [acceptor protein]-N(6)-ubiquitinyl-L-lysine.. It participates in protein modification; protein ubiquitination. Functionally, E3 ubiquitin-protein ligase which accepts ubiquitin from E2 ubiquitin-conjugating enzymes UBE2L3 and UBE2L6 in the form of a thioester and then directly transfers the ubiquitin to targeted substrates, such as SNCAIP or CASR. Specifically ubiquitinates pathogenic SOD1 variants, which leads to their proteasomal degradation and to neuronal protection. This Homo sapiens (Human) protein is E3 ubiquitin-protein ligase RNF19A (RNF19A).